The chain runs to 274 residues: tRNA-cytidine(32) 2-sulfurtransferase (274 aa).

The PP-loop motif motif lies at 40 to 45; it reads SGGKDS. [4Fe-4S] cluster is bound by residues Cys115, Cys118, and Cys206.

Belongs to the TtcA family. As to quaternary structure, homodimer. The cofactor is Mg(2+). [4Fe-4S] cluster is required as a cofactor.

The protein resides in the cytoplasm. It catalyses the reaction cytidine(32) in tRNA + S-sulfanyl-L-cysteinyl-[cysteine desulfurase] + AH2 + ATP = 2-thiocytidine(32) in tRNA + L-cysteinyl-[cysteine desulfurase] + A + AMP + diphosphate + H(+). It functions in the pathway tRNA modification. In terms of biological role, catalyzes the ATP-dependent 2-thiolation of cytidine in position 32 of tRNA, to form 2-thiocytidine (s(2)C32). The sulfur atoms are provided by the cysteine/cysteine desulfurase (IscS) system. The chain is tRNA-cytidine(32) 2-sulfurtransferase from Pseudomonas putida (strain W619).